A 128-amino-acid chain; its full sequence is Translation initiation factor 5A (128 aa).

Position 35 is a hypusine (lysine 35).

It belongs to the eIF-5A family.

The protein localises to the cytoplasm. Functions by promoting the formation of the first peptide bond. In Archaeoglobus fulgidus (strain ATCC 49558 / DSM 4304 / JCM 9628 / NBRC 100126 / VC-16), this protein is Translation initiation factor 5A (eif5a).